A 351-amino-acid polypeptide reads, in one-letter code: UDP-3-O-acylglucosamine N-acyltransferase (351 aa).

Catalysis depends on His257, which acts as the Proton acceptor.

Belongs to the transferase hexapeptide repeat family. LpxD subfamily. In terms of assembly, homotrimer.

The catalysed reaction is a UDP-3-O-[(3R)-3-hydroxyacyl]-alpha-D-glucosamine + a (3R)-hydroxyacyl-[ACP] = a UDP-2-N,3-O-bis[(3R)-3-hydroxyacyl]-alpha-D-glucosamine + holo-[ACP] + H(+). The protein operates within bacterial outer membrane biogenesis; LPS lipid A biosynthesis. Functionally, catalyzes the N-acylation of UDP-3-O-acylglucosamine using 3-hydroxyacyl-ACP as the acyl donor. Is involved in the biosynthesis of lipid A, a phosphorylated glycolipid that anchors the lipopolysaccharide to the outer membrane of the cell. The sequence is that of UDP-3-O-acylglucosamine N-acyltransferase from Methylorubrum extorquens (strain CM4 / NCIMB 13688) (Methylobacterium extorquens).